The sequence spans 506 residues: Maturase K (506 aa).

This sequence belongs to the intron maturase 2 family. MatK subfamily.

Its subcellular location is the plastid. It is found in the chloroplast. In terms of biological role, usually encoded in the trnK tRNA gene intron. Probably assists in splicing its own and other chloroplast group II introns. In Rhododendron tsusiophyllum (Rhododendron), this protein is Maturase K.